The chain runs to 261 residues: Cytochrome c oxidase subunit 3 (261 aa).

The Mitochondrial matrix segment spans residues 1–15 (MTHQTHAYHMVNPSP). The chain crosses the membrane as a helical span at residues 16 to 34 (WPLTGALSALLMTSGLIMW). Topologically, residues 35–40 (FHFNST) are mitochondrial intermembrane. The chain crosses the membrane as a helical span at residues 41–66 (TLLMLGLTTNMLTMYQWWRDVVREST). Over 67 to 72 (FQGHHT) the chain is Mitochondrial matrix. Residues 73-105 (PNVQKGLRYGMILFIISEVLFFTGFFWAFYHSS) form a helical membrane-spanning segment. The Mitochondrial intermembrane portion of the chain corresponds to 106-128 (LAPTPELGGCWPPTGIHPLNPLE). Residues 129 to 152 (VPLLNTSVLLASGVSITWAHHSLM) traverse the membrane as a helical segment. At 153-155 (EGN) the chain is on the mitochondrial matrix side. Residues 156–183 (RNHMLQALFITIALGVYFTLLQASEYYE) form a helical membrane-spanning segment. The Mitochondrial intermembrane portion of the chain corresponds to 184-190 (APFTISD). Residues 191-223 (GVYGSTFFVATGFHGLHVIIGSTFLIVCFFRQL) traverse the membrane as a helical segment. The Mitochondrial matrix segment spans residues 224-232 (KFHFTSSHH). A helical membrane pass occupies residues 233–256 (FGFEAAAWYWHFVDVVWLFLYVSI). Over 257 to 261 (YWWGS) the chain is Mitochondrial intermembrane.

Belongs to the cytochrome c oxidase subunit 3 family. As to quaternary structure, component of the cytochrome c oxidase (complex IV, CIV), a multisubunit enzyme composed of 14 subunits. The complex is composed of a catalytic core of 3 subunits MT-CO1, MT-CO2 and MT-CO3, encoded in the mitochondrial DNA, and 11 supernumerary subunits COX4I, COX5A, COX5B, COX6A, COX6B, COX6C, COX7A, COX7B, COX7C, COX8 and NDUFA4, which are encoded in the nuclear genome. The complex exists as a monomer or a dimer and forms supercomplexes (SCs) in the inner mitochondrial membrane with NADH-ubiquinone oxidoreductase (complex I, CI) and ubiquinol-cytochrome c oxidoreductase (cytochrome b-c1 complex, complex III, CIII), resulting in different assemblies (supercomplex SCI(1)III(2)IV(1) and megacomplex MCI(2)III(2)IV(2)).

It is found in the mitochondrion inner membrane. It carries out the reaction 4 Fe(II)-[cytochrome c] + O2 + 8 H(+)(in) = 4 Fe(III)-[cytochrome c] + 2 H2O + 4 H(+)(out). Functionally, component of the cytochrome c oxidase, the last enzyme in the mitochondrial electron transport chain which drives oxidative phosphorylation. The respiratory chain contains 3 multisubunit complexes succinate dehydrogenase (complex II, CII), ubiquinol-cytochrome c oxidoreductase (cytochrome b-c1 complex, complex III, CIII) and cytochrome c oxidase (complex IV, CIV), that cooperate to transfer electrons derived from NADH and succinate to molecular oxygen, creating an electrochemical gradient over the inner membrane that drives transmembrane transport and the ATP synthase. Cytochrome c oxidase is the component of the respiratory chain that catalyzes the reduction of oxygen to water. Electrons originating from reduced cytochrome c in the intermembrane space (IMS) are transferred via the dinuclear copper A center (CU(A)) of subunit 2 and heme A of subunit 1 to the active site in subunit 1, a binuclear center (BNC) formed by heme A3 and copper B (CU(B)). The BNC reduces molecular oxygen to 2 water molecules using 4 electrons from cytochrome c in the IMS and 4 protons from the mitochondrial matrix. This chain is Cytochrome c oxidase subunit 3 (MT-CO3), found in Gazella spekei (Speke's gazelle).